The sequence spans 40 residues: MKVRASIKSLKNQPGAQVVRRRGRVYVINKLNPRFEGLQG.

This sequence belongs to the bacterial ribosomal protein bL36 family.

The sequence is that of Large ribosomal subunit protein bL36B from Leifsonia xyli subsp. xyli (strain CTCB07).